Consider the following 173-residue polypeptide: Large ribosomal subunit protein uL10 (173 aa).

It belongs to the universal ribosomal protein uL10 family. In terms of assembly, part of the ribosomal stalk of the 50S ribosomal subunit. The N-terminus interacts with L11 and the large rRNA to form the base of the stalk. The C-terminus forms an elongated spine to which L12 dimers bind in a sequential fashion forming a multimeric L10(L12)X complex.

Its function is as follows. Forms part of the ribosomal stalk, playing a central role in the interaction of the ribosome with GTP-bound translation factors. The chain is Large ribosomal subunit protein uL10 from Beutenbergia cavernae (strain ATCC BAA-8 / DSM 12333 / CCUG 43141 / JCM 11478 / NBRC 16432 / NCIMB 13614 / HKI 0122).